Reading from the N-terminus, the 310-residue chain is Beta-lactamase AST-1 (310 aa).

The signal sequence occupies residues 1-31 (MTFSALPFRRADRRRLLAAALAACALTLTAA). Cys-32 is lipidated: N-palmitoyl cysteine. Cys-32 carries the S-diacylglycerol cysteine lipid modification. The active-site Acyl-ester intermediate is Ser-91. A substrate-binding site is contributed by Ser-151. Catalysis depends on Glu-187, which acts as the Proton acceptor. 255-257 (KTG) provides a ligand contact to substrate.

Belongs to the class-A beta-lactamase family.

Its subcellular location is the cell membrane. It catalyses the reaction a beta-lactam + H2O = a substituted beta-amino acid. Inhibited by clavulanic acid. Functionally, confers high levels of resistance to amoxicillin, benzylpenicillin, piperacillin, ticarcillin and cephalothin. Not active against ceftazidime, cefotaxime and aztreonam. The polypeptide is Beta-lactamase AST-1 (bla) (Nocardia asteroides).